Here is a 444-residue protein sequence, read N- to C-terminus: Sensor protein CiaH (444 aa).

Transmembrane regions (helical) follow at residues 21–41 (FGVFTLIFSTMTLIILQVMHS) and 183–203 (LIVVVMASFWILSLLASLYLA). A Histidine kinase domain is found at 223 to 438 (NASHELRTPL…IFEVKIAIQT (216 aa)). A Phosphohistidine; by autocatalysis modification is found at H226.

Its subcellular location is the cell membrane. The enzyme catalyses ATP + protein L-histidine = ADP + protein N-phospho-L-histidine.. Its function is as follows. Member of the two-component regulatory system CiaH/CiaR. Involved in early steps of competence regulation and in penicillin susceptibility. Probably phosphorylates CiaR. This is Sensor protein CiaH (ciaH) from Streptococcus pneumoniae serotype 4 (strain ATCC BAA-334 / TIGR4).